A 317-amino-acid polypeptide reads, in one-letter code: Ribosomal protein L11 methyltransferase (317 aa).

S-adenosyl-L-methionine contacts are provided by Thr-158, Gly-179, Asp-201, and Asn-244.

It belongs to the methyltransferase superfamily. PrmA family.

Its subcellular location is the cytoplasm. The catalysed reaction is L-lysyl-[protein] + 3 S-adenosyl-L-methionine = N(6),N(6),N(6)-trimethyl-L-lysyl-[protein] + 3 S-adenosyl-L-homocysteine + 3 H(+). Its function is as follows. Methylates ribosomal protein L11. In Lactococcus lactis subsp. cremoris (strain SK11), this protein is Ribosomal protein L11 methyltransferase.